The chain runs to 202 residues: LexA repressor (202 aa).

A DNA-binding region (H-T-H motif) is located at residues Arg-28–Lys-48. Active-site for autocatalytic cleavage activity residues include Ser-123 and Lys-160.

This sequence belongs to the peptidase S24 family. In terms of assembly, homodimer.

It carries out the reaction Hydrolysis of Ala-|-Gly bond in repressor LexA.. Represses a number of genes involved in the response to DNA damage (SOS response), including recA and lexA. In the presence of single-stranded DNA, RecA interacts with LexA causing an autocatalytic cleavage which disrupts the DNA-binding part of LexA, leading to derepression of the SOS regulon and eventually DNA repair. This Pseudomonas chlororaphis (Pseudomonas aureofaciens) protein is LexA repressor.